A 67-amino-acid chain; its full sequence is Preprofallaxidin-1 (67 aa).

An N-terminal signal peptide occupies residues Met1–Cys22. Positions Asp23–Arg46 are excised as a propeptide. A disordered region spans residues Lys24–Arg46. Acidic residues predominate over residues Glu30–Ser42.

Expressed by the skin glands.

Its subcellular location is the secreted. In terms of biological role, fallaxidin-4.1 shows antibacterial activity against the Gram-positive bacteria L.lactis (MIC=12 uM), M.luteus (MIC=100 uM), S.epidermidis (MIC=100 uM) and S.uberis (MIC=50 uM). No antibacterial activity against the Gram-positive bacteria B.cereus, E.faecalis, L.innocua, S.aureus, or the Gram-negative bacteria E.cloacae and E.coli. Inhibits the formation of NO by neuronal nitric oxide synthase with an IC(50) of 13.3 uM. This chain is Preprofallaxidin-1, found in Litoria fallax (Eastern dwarf tree frog).